The sequence spans 129 residues: MAKTPVRARKRVKKQVVDGVAHIHASFNNTIVTITDRQGNALAWATAGGSGFRGSRKSTPFAAQVAAERCAEMVKEFGLKNLEVMVKGPGPGRESTIRALNAAGFRITNITDVTPIPHNGCRPPKKRRV.

Belongs to the universal ribosomal protein uS11 family. Part of the 30S ribosomal subunit. Interacts with proteins S7 and S18. Binds to IF-3.

In terms of biological role, located on the platform of the 30S subunit, it bridges several disparate RNA helices of the 16S rRNA. Forms part of the Shine-Dalgarno cleft in the 70S ribosome. The polypeptide is Small ribosomal subunit protein uS11 (Actinobacillus succinogenes (strain ATCC 55618 / DSM 22257 / CCUG 43843 / 130Z)).